The primary structure comprises 233 residues: Antiholin-like protein LrgB (233 aa).

The next 6 membrane-spanning stretches (helical) occupy residues 5–25, 33–53, 63–83, 97–117, 152–172, and 212–232; these read LGINTPYFGILVSLIPFVIAT, GFFLLAPLFVSMVAGIAFLKL, IGGDIINFFLEPATICFAIPL, IFGGIAVGTIIALLLIYLVAI, LTSLAVILNAVVISALGAKIV, and IAVVIVGVIVVAVVPILAPIL.

This sequence belongs to the CidB/LrgB family. LrgB subfamily.

The protein resides in the cell membrane. Its function is as follows. Inhibits the expression or activity of extracellular murein hydrolases by interacting, possibly with LrgA, with the holin-like proteins CidA and/or CidB. The LrgAB and CidAB proteins may affect the proton motive force of the membrane. May be involved in programmed cell death (PCD), possibly triggering PCD in response to antibiotics and environmental stresses. The protein is Antiholin-like protein LrgB of Staphylococcus epidermidis (strain ATCC 35984 / DSM 28319 / BCRC 17069 / CCUG 31568 / BM 3577 / RP62A).